A 246-amino-acid polypeptide reads, in one-letter code: MIRMNISVRNLKEITDLLSTIVSEAKFKVDENGMSVTAVDPAHVAMIRLEVPKEVFSEFRSDGTEEIALDIDRLKSVIRLANSSENVGITKDKEKLKFDLGNISKSVSLLDPSTIVTPKIPNIASEYYAIIKRSDFERGLRAAEDISDSIRFVLSSEGFRATSHSESEESEMVLPKDMLSDLSCSDTIKSSYPLEYLLKFIKAVSSADSLKISFRDDYPLSIEFYLDQNPSAKIKGLFLLAPRMEQ.

The protein belongs to the PCNA family. In terms of assembly, homotrimer. The subunits circularize to form a toroid; DNA passes through its center. Replication factor C (RFC) is required to load the toroid on the DNA.

Sliding clamp subunit that acts as a moving platform for DNA processing. Responsible for tethering the catalytic subunit of DNA polymerase and other proteins to DNA during high-speed replication. The polypeptide is DNA polymerase sliding clamp (Thermoplasma volcanium (strain ATCC 51530 / DSM 4299 / JCM 9571 / NBRC 15438 / GSS1)).